We begin with the raw amino-acid sequence, 1486 residues long: Chromosome partition protein MukB (1486 aa).

Residue 34–41 (GGNGAGKS) participates in ATP binding. 3 coiled-coil regions span residues 326–418 (LEAD…QYNQ), 444–480 (LETF…QAYQ), and 509–603 (RHLA…RAPV). The flexible hinge stretch occupies residues 666 to 783 (PGGSEDQRLN…EVPLFGRAAR (118 aa)). Coiled coils occupy residues 835-923 (EAEI…AKLE), 977-1115 (EMLS…TAKA), and 1209-1266 (VEAI…QNVS).

Belongs to the SMC family. MukB subfamily. Homodimerization via its hinge domain. Binds to DNA via its C-terminal region. Interacts, and probably forms a ternary complex, with MukE and MukF via its C-terminal region. The complex formation is stimulated by calcium or magnesium. Interacts with tubulin-related protein FtsZ.

The protein localises to the cytoplasm. The protein resides in the nucleoid. Its function is as follows. Plays a central role in chromosome condensation, segregation and cell cycle progression. Functions as a homodimer, which is essential for chromosome partition. Involved in negative DNA supercoiling in vivo, and by this means organize and compact chromosomes. May achieve or facilitate chromosome segregation by condensation DNA from both sides of a centrally located replisome during cell division. The sequence is that of Chromosome partition protein MukB from Shigella flexneri serotype 5b (strain 8401).